The chain runs to 250 residues: 3-deoxy-manno-octulosonate cytidylyltransferase (250 aa).

The protein belongs to the KdsB family.

Its subcellular location is the cytoplasm. It catalyses the reaction 3-deoxy-alpha-D-manno-oct-2-ulosonate + CTP = CMP-3-deoxy-beta-D-manno-octulosonate + diphosphate. The protein operates within nucleotide-sugar biosynthesis; CMP-3-deoxy-D-manno-octulosonate biosynthesis; CMP-3-deoxy-D-manno-octulosonate from 3-deoxy-D-manno-octulosonate and CTP: step 1/1. Its pathway is bacterial outer membrane biogenesis; lipopolysaccharide biosynthesis. Its function is as follows. Activates KDO (a required 8-carbon sugar) for incorporation into bacterial lipopolysaccharide in Gram-negative bacteria. In Rhodopirellula baltica (strain DSM 10527 / NCIMB 13988 / SH1), this protein is 3-deoxy-manno-octulosonate cytidylyltransferase.